Here is a 311-residue protein sequence, read N- to C-terminus: tRNA-cytidine(32) 2-sulfurtransferase (311 aa).

A PP-loop motif motif is present at residues 47 to 52 (SGGKDS). [4Fe-4S] cluster is bound by residues Cys122, Cys125, and Cys213.

Belongs to the TtcA family. In terms of assembly, homodimer. Requires Mg(2+) as cofactor. [4Fe-4S] cluster serves as cofactor.

Its subcellular location is the cytoplasm. It carries out the reaction cytidine(32) in tRNA + S-sulfanyl-L-cysteinyl-[cysteine desulfurase] + AH2 + ATP = 2-thiocytidine(32) in tRNA + L-cysteinyl-[cysteine desulfurase] + A + AMP + diphosphate + H(+). Its pathway is tRNA modification. Functionally, catalyzes the ATP-dependent 2-thiolation of cytidine in position 32 of tRNA, to form 2-thiocytidine (s(2)C32). The sulfur atoms are provided by the cysteine/cysteine desulfurase (IscS) system. This is tRNA-cytidine(32) 2-sulfurtransferase from Escherichia coli O45:K1 (strain S88 / ExPEC).